Here is a 301-residue protein sequence, read N- to C-terminus: ATP synthase gamma chain (301 aa).

The protein belongs to the ATPase gamma chain family. In terms of assembly, F-type ATPases have 2 components, CF(1) - the catalytic core - and CF(0) - the membrane proton channel. CF(1) has five subunits: alpha(3), beta(3), gamma(1), delta(1), epsilon(1). CF(0) has three main subunits: a, b and c.

It localises to the cell inner membrane. In terms of biological role, produces ATP from ADP in the presence of a proton gradient across the membrane. The gamma chain is believed to be important in regulating ATPase activity and the flow of protons through the CF(0) complex. This chain is ATP synthase gamma chain, found in Bordetella pertussis (strain Tohama I / ATCC BAA-589 / NCTC 13251).